The following is a 29-amino-acid chain: Photosystem I reaction center subunit XII (29 aa).

The chain crosses the membrane as a helical span at residues 7–26; the sequence is IFVALILALFSFVLAIRLGT.

It belongs to the PsaM family.

It is found in the plastid. It localises to the chloroplast thylakoid membrane. This chain is Photosystem I reaction center subunit XII, found in Guillardia theta (Cryptophyte).